Here is a 234-residue protein sequence, read N- to C-terminus: Endonuclease NucS (234 aa).

This sequence belongs to the NucS endonuclease family.

Its subcellular location is the cytoplasm. Cleaves both 3' and 5' ssDNA extremities of branched DNA structures. The sequence is that of Endonuclease NucS from Bifidobacterium animalis subsp. lactis (strain AD011).